We begin with the raw amino-acid sequence, 89 residues long: UPF0147 protein Msed_2034 (89 aa).

It belongs to the UPF0147 family.

This Metallosphaera sedula (strain ATCC 51363 / DSM 5348 / JCM 9185 / NBRC 15509 / TH2) protein is UPF0147 protein Msed_2034.